The following is a 479-amino-acid chain: ESX-1 secretion system ATPase EccB1 (479 aa).

The Cytoplasmic segment spans residues 1–44; it reads MAGFRLTTKVQVSGWRFLLRRVEHAIVRRDTRMFDDPLQFYSRA. A helical membrane pass occupies residues 45 to 65; the sequence is VFAGVVVSVLICLGAALMAYF. Residues 66-479 are Periplasmic-facing; the sequence is KPLGKQGSDQ…NPRKVASGEG (414 aa). A disulfide bridge connects residues cysteine 152 and cysteine 347.

It belongs to the EccB family. In terms of assembly, part of the ESX-1 / type VII secretion system (T7SS), which is composed of cytosolic and membrane components. The ESX-1 membrane complex is composed of EccB1, EccCa1, EccCb1, EccD1 and EccE1.

It localises to the cell inner membrane. An ATPase. Part of the ESX-1 / type VII specialized secretion system (T7SS), which exports several proteins including EsxA and EsxB. Plays a role in DNA conjugation, in both donor and recipient strains. The polypeptide is ESX-1 secretion system ATPase EccB1 (Mycolicibacterium smegmatis (strain MKD8) (Mycobacterium smegmatis)).